Reading from the N-terminus, the 319-residue chain is Cytochrome c biogenesis protein CcsA (319 aa).

8 consecutive transmembrane segments (helical) span residues 11–31 (VNFA…SLAF), 34–54 (ISGL…ALAL), 71–91 (LYES…FIES), 97–117 (LIGA…SLAL), 142–162 (IMMI…LFLI), 227–247 (IIGL…VWAN), 254–274 (WSWD…AAYL), and 288–308 (AILA…VNFL).

This sequence belongs to the CcmF/CycK/Ccl1/NrfE/CcsA family. May interact with Ccs1.

Its subcellular location is the plastid. The protein localises to the chloroplast thylakoid membrane. Required during biogenesis of c-type cytochromes (cytochrome c6 and cytochrome f) at the step of heme attachment. This is Cytochrome c biogenesis protein CcsA from Porphyra purpurea (Red seaweed).